Consider the following 246-residue polypeptide: tRNA (guanine-N(1)-)-methyltransferase (246 aa).

S-adenosyl-L-methionine contacts are provided by residues Gly113 and 133-138 (IGDYVL).

The protein belongs to the RNA methyltransferase TrmD family. In terms of assembly, homodimer.

It localises to the cytoplasm. The enzyme catalyses guanosine(37) in tRNA + S-adenosyl-L-methionine = N(1)-methylguanosine(37) in tRNA + S-adenosyl-L-homocysteine + H(+). Specifically methylates guanosine-37 in various tRNAs. This chain is tRNA (guanine-N(1)-)-methyltransferase, found in Yersinia enterocolitica serotype O:8 / biotype 1B (strain NCTC 13174 / 8081).